The sequence spans 284 residues: Bifunctional protein FolD (284 aa).

NADP(+) contacts are provided by residues 165-167 and Ser-190; that span reads GRS.

It belongs to the tetrahydrofolate dehydrogenase/cyclohydrolase family. As to quaternary structure, homodimer.

The enzyme catalyses (6R)-5,10-methylene-5,6,7,8-tetrahydrofolate + NADP(+) = (6R)-5,10-methenyltetrahydrofolate + NADPH. It catalyses the reaction (6R)-5,10-methenyltetrahydrofolate + H2O = (6R)-10-formyltetrahydrofolate + H(+). It participates in one-carbon metabolism; tetrahydrofolate interconversion. Catalyzes the oxidation of 5,10-methylenetetrahydrofolate to 5,10-methenyltetrahydrofolate and then the hydrolysis of 5,10-methenyltetrahydrofolate to 10-formyltetrahydrofolate. This Streptococcus mutans serotype c (strain ATCC 700610 / UA159) protein is Bifunctional protein FolD.